The sequence spans 197 residues: Holliday junction branch migration complex subunit RuvA (197 aa).

The segment at 1–64 is domain I; it reads MIASIRGILI…EDSLTLYGFE (64 aa). A domain II region spans residues 65–145; sequence TVEQRQLFET…GLPTGAAVTP (81 aa). Residues 146–148 form a flexible linker region; it reads AVA. A domain III region spans residues 148–197; the sequence is AAANAELSEALISLGFTDAEAAAAIAALPSDAPPDLEERVRLALRYFSAS.

It belongs to the RuvA family. In terms of assembly, homotetramer. Forms an RuvA(8)-RuvB(12)-Holliday junction (HJ) complex. HJ DNA is sandwiched between 2 RuvA tetramers; dsDNA enters through RuvA and exits via RuvB. An RuvB hexamer assembles on each DNA strand where it exits the tetramer. Each RuvB hexamer is contacted by two RuvA subunits (via domain III) on 2 adjacent RuvB subunits; this complex drives branch migration. In the full resolvosome a probable DNA-RuvA(4)-RuvB(12)-RuvC(2) complex forms which resolves the HJ.

Its subcellular location is the cytoplasm. Functionally, the RuvA-RuvB-RuvC complex processes Holliday junction (HJ) DNA during genetic recombination and DNA repair, while the RuvA-RuvB complex plays an important role in the rescue of blocked DNA replication forks via replication fork reversal (RFR). RuvA specifically binds to HJ cruciform DNA, conferring on it an open structure. The RuvB hexamer acts as an ATP-dependent pump, pulling dsDNA into and through the RuvAB complex. HJ branch migration allows RuvC to scan DNA until it finds its consensus sequence, where it cleaves and resolves the cruciform DNA. This Roseiflexus sp. (strain RS-1) protein is Holliday junction branch migration complex subunit RuvA.